Consider the following 440-residue polypeptide: D-serine dehydratase (440 aa).

Lys116 is modified (N6-(pyridoxal phosphate)lysine).

This sequence belongs to the serine/threonine dehydratase family. DsdA subfamily. Monomer. It depends on pyridoxal 5'-phosphate as a cofactor.

The enzyme catalyses D-serine = pyruvate + NH4(+). The protein is D-serine dehydratase of Salmonella typhimurium (strain LT2 / SGSC1412 / ATCC 700720).